We begin with the raw amino-acid sequence, 243 residues long: Collagen triple helix repeat-containing protein 1 (243 aa).

A signal peptide spans 1–30 (MRPQGPAASPQRLRGLLLLLLLQLPAPSSA). One can recognise a Collagen-like domain in the interval 57–90 (QGPAGVPGRDGSPGANGIPGTPGIPGRDGFKGEK). A disordered region spans residues 62–85 (VPGRDGSPGANGIPGTPGIPGRDG). N186 carries an N-linked (GlcNAc...) asparagine glycan.

N-glycosylated. In terms of tissue distribution, isoform 1 is expressed in calcified atherosclerotic plaque and chondrocyte-like cells.

The protein localises to the secreted. Its subcellular location is the extracellular space. It localises to the extracellular matrix. Its function is as follows. May act as a negative regulator of collagen matrix deposition. In Homo sapiens (Human), this protein is Collagen triple helix repeat-containing protein 1 (CTHRC1).